The sequence spans 695 residues: Glycine--tRNA ligase beta subunit (695 aa).

Belongs to the class-II aminoacyl-tRNA synthetase family. Tetramer of two alpha and two beta subunits.

Its subcellular location is the cytoplasm. It carries out the reaction tRNA(Gly) + glycine + ATP = glycyl-tRNA(Gly) + AMP + diphosphate. The protein is Glycine--tRNA ligase beta subunit of Lawsonia intracellularis (strain PHE/MN1-00).